The sequence spans 249 residues: Small ribosomal subunit protein uS3 (249 aa).

The KH type-2 domain maps to Val39–Arg107. Residues Leu215–Gly249 are disordered. Positions Gly230–Gly249 are enriched in basic and acidic residues.

The protein belongs to the universal ribosomal protein uS3 family. Part of the 30S ribosomal subunit. Forms a tight complex with proteins S10 and S14.

Functionally, binds the lower part of the 30S subunit head. Binds mRNA in the 70S ribosome, positioning it for translation. This is Small ribosomal subunit protein uS3 from Caulobacter sp. (strain K31).